Here is a 465-residue protein sequence, read N- to C-terminus: UDP-glycosyltransferase 89A2 (465 aa).

UDP-alpha-D-glucose contacts are provided by residues S291, 342–344 (VSQ), 359–367 (HCGWNSVLE), and 381–384 (EADQ).

The protein belongs to the UDP-glycosyltransferase family.

Functionally, glucosyltransferase that glucosylates benzoates and benzoate derivatives in vitro. This chain is UDP-glycosyltransferase 89A2 (UGT89A2), found in Arabidopsis thaliana (Mouse-ear cress).